A 458-amino-acid polypeptide reads, in one-letter code: Transcription factor ORF10 (458 aa).

A DNA-binding region (zn(2)-C6 fungal-type) is located at residues 38-65 (CESCRLKKLRCSGHKSGCDRCRSQAMKC). A disordered region spans residues 69–109 (IGAPSNSSRPKSRSHFQPNFSNMSGTAGTSKAPSPLGNDGV). Positions 71–100 (APSNSSRPKSRSHFQPNFSNMSGTAGTSKA) are enriched in polar residues.

The protein localises to the nucleus. Its function is as follows. Transcription factor that specifically regulates the expression of the gene cluster that mediates the biosynthesis of PR-toxin, a bicyclic sesquiterpene belonging to the eremophilane class and acting as a mycotoxin. The protein is Transcription factor ORF10 of Penicillium roqueforti (strain FM164).